The primary structure comprises 270 residues: MLLGSVPQLDRIAVQLGPFPVYWYGVIIGTGVLLGLWLATREGERLGIHKDTFIDLVLIAVPIAILFARMYYVIFEWEYYSQNPSQIINIRQGGLAIHGGLIGAVITGILFAKRRGLSFWKLADIAAPSILLGQAIGRWGNFMNQEAHGDEVTRQFLEGLHLPDFIINQMYIDGVYYHPTFLYESLWNFAGVILLLALRKVNLRRGELFFTYLIWYSVGRFFVEGLRTDSLMLGPLRIAQVMSIGIVVISIIFIIVRRKMGQADKRYLEN.

Transmembrane regions (helical) follow at residues 19–39 (FPVY…LWLA), 54–74 (IDLV…YYVI), 92–112 (QGGL…ILFA), and 116–136 (GLSF…GQAI). A 1,2-diacyl-sn-glycero-3-phospho-(1'-sn-glycerol) is bound at residue Arg-138. A run of 3 helical transmembrane segments spans residues 178–198 (HPTF…LLAL), 206–226 (GELF…VEGL), and 236–256 (LRIA…FIIV).

Belongs to the Lgt family.

Its subcellular location is the cell membrane. The catalysed reaction is L-cysteinyl-[prolipoprotein] + a 1,2-diacyl-sn-glycero-3-phospho-(1'-sn-glycerol) = an S-1,2-diacyl-sn-glyceryl-L-cysteinyl-[prolipoprotein] + sn-glycerol 1-phosphate + H(+). It participates in protein modification; lipoprotein biosynthesis (diacylglyceryl transfer). Functionally, catalyzes the transfer of the diacylglyceryl group from phosphatidylglycerol to the sulfhydryl group of the N-terminal cysteine of a prolipoprotein, the first step in the formation of mature lipoproteins. The chain is Phosphatidylglycerol--prolipoprotein diacylglyceryl transferase from Bacillus mycoides (strain KBAB4) (Bacillus weihenstephanensis).